The following is a 232-amino-acid chain: 2,3-bisphosphoglycerate-dependent phosphoglycerate mutase (232 aa).

Substrate is bound by residues 8 to 15, 21 to 22, Arg-60, 87 to 90, Lys-98, 114 to 115, and 183 to 184; these read RHGESLWN, TG, ERHY, RR, and GN. The active-site Tele-phosphohistidine intermediate is His-9. The Proton donor/acceptor role is filled by Glu-87.

The protein belongs to the phosphoglycerate mutase family. BPG-dependent PGAM subfamily.

The enzyme catalyses (2R)-2-phosphoglycerate = (2R)-3-phosphoglycerate. Its pathway is carbohydrate degradation; glycolysis; pyruvate from D-glyceraldehyde 3-phosphate: step 3/5. Functionally, catalyzes the interconversion of 2-phosphoglycerate and 3-phosphoglycerate. The polypeptide is 2,3-bisphosphoglycerate-dependent phosphoglycerate mutase (Clostridium beijerinckii (strain ATCC 51743 / NCIMB 8052) (Clostridium acetobutylicum)).